Consider the following 88-residue polypeptide: Small ribosomal subunit protein uS15 (88 aa).

This sequence belongs to the universal ribosomal protein uS15 family. As to quaternary structure, part of the 30S ribosomal subunit. Forms a bridge to the 50S subunit in the 70S ribosome, contacting the 23S rRNA.

One of the primary rRNA binding proteins, it binds directly to 16S rRNA where it helps nucleate assembly of the platform of the 30S subunit by binding and bridging several RNA helices of the 16S rRNA. In terms of biological role, forms an intersubunit bridge (bridge B4) with the 23S rRNA of the 50S subunit in the ribosome. This chain is Small ribosomal subunit protein uS15, found in Flavobacterium johnsoniae (strain ATCC 17061 / DSM 2064 / JCM 8514 / BCRC 14874 / CCUG 350202 / NBRC 14942 / NCIMB 11054 / UW101) (Cytophaga johnsonae).